The sequence spans 221 residues: Endonuclease V (221 aa).

Positions 38 and 104 each coordinate Mg(2+).

It belongs to the endonuclease V family. It depends on Mg(2+) as a cofactor.

It is found in the cytoplasm. It catalyses the reaction Endonucleolytic cleavage at apurinic or apyrimidinic sites to products with a 5'-phosphate.. In terms of biological role, DNA repair enzyme involved in the repair of deaminated bases. Selectively cleaves double-stranded DNA at the second phosphodiester bond 3' to a deoxyinosine leaving behind the intact lesion on the nicked DNA. Recognizes only deoxyinosine. In Archaeoglobus fulgidus (strain ATCC 49558 / DSM 4304 / JCM 9628 / NBRC 100126 / VC-16), this protein is Endonuclease V.